Reading from the N-terminus, the 233-residue chain is H-2 class II histocompatibility antigen, A-F alpha chain (233 aa).

The alpha-1 stretch occupies residues glutamate 1–asparagine 88. At glutamate 1–glutamate 195 the chain is on the extracellular side. The interval glutamate 89–tryptophan 182 is alpha-2. The Ig-like C1-type domain occupies proline 91–glutamate 183. Cysteine 111 and cysteine 167 are oxidised to a cystine. A glycan (N-linked (GlcNAc...) asparagine) is linked at asparagine 122. The connecting peptide stretch occupies residues glutamate 183–glutamate 195. Residues threonine 196–leucine 221 form a helical membrane-spanning segment. The Cytoplasmic segment spans residues arginine 222–leucine 233.

It belongs to the MHC class II family.

The protein resides in the membrane. This Mus musculus (Mouse) protein is H-2 class II histocompatibility antigen, A-F alpha chain (H2-Aa).